The following is a 278-amino-acid chain: Large ribosomal subunit protein uL2 (278 aa).

2 disordered regions span residues 27–58 and 224–278; these read STPE…GGGH and VVMN…GKKR. The span at 37-58 shows a compositional bias: basic residues; the sequence is LHGKGGRNAHGRITTRHKGGGH. The segment covering 253 to 268 has biased composition (basic and acidic residues); the sequence is PEGRTRKPNKPSDKLI. Over residues 269-278 the composition is skewed to basic residues; sequence VRRRRTGKKR.

This sequence belongs to the universal ribosomal protein uL2 family. As to quaternary structure, part of the 50S ribosomal subunit. Forms a bridge to the 30S subunit in the 70S ribosome.

Its function is as follows. One of the primary rRNA binding proteins. Required for association of the 30S and 50S subunits to form the 70S ribosome, for tRNA binding and peptide bond formation. It has been suggested to have peptidyltransferase activity; this is somewhat controversial. Makes several contacts with the 16S rRNA in the 70S ribosome. The chain is Large ribosomal subunit protein uL2 from Mycobacterium sp. (strain KMS).